The following is a 382-amino-acid chain: MKITHITTYRLPPRWMFLKIETDEGVVGWGEPVIEGRARTVEAAVHEFADYLIGKDPARINDLWQVMYRAGFYRGGPIMMSAIAGIDQALWDIKGKVLNAPVWQLMGGLVRDKIKAYSWVGGDRPADVIDGIEKLRGIGFDTFKLNGCEEMGVIDNSRAVDAAVNTVAQIREAFGSEIEFGLDFHGRVSAPMAKVLIKELEPYRPLFIEEPVLAEQAEYYPRLAAQTHIPIAAGERMFSRFEFKRVLDAGGLGILQPDLSHAGGITECYKIAGMAEAYDVALAPHCPLGPIALAACLHIDFVSRNAVFQEQSMGIHYNKGAELLDFVKNKEDFSMDGGFFKPLTKPGLGVDIDEARVIELSKSAPDWSNPLWRHADGSVAEW.

D183 contacts Mg(2+). H185 serves as the catalytic Proton donor. Mg(2+) contacts are provided by E209 and E235. The Proton acceptor role is filled by H285.

Belongs to the mandelate racemase/muconate lactonizing enzyme family. GalD subfamily. The cofactor is Mg(2+).

The enzyme catalyses D-galactonate = 2-dehydro-3-deoxy-D-galactonate + H2O. It functions in the pathway carbohydrate acid metabolism; D-galactonate degradation; D-glyceraldehyde 3-phosphate and pyruvate from D-galactonate: step 1/3. Functionally, catalyzes the dehydration of D-galactonate to 2-keto-3-deoxy-D-galactonate. This is D-galactonate dehydratase from Salmonella paratyphi A (strain AKU_12601).